Consider the following 131-residue polypeptide: Profilin-1 (131 aa).

Cys13 and Cys115 are oxidised to a cystine. The Involved in PIP2 interaction motif lies at 81-97; it reads RVIRGKKGAGGITIKKT. Thr111 carries the phosphothreonine modification.

It belongs to the profilin family. Occurs in many kinds of cells as a complex with monomeric actin in a 1:1 ratio.

It localises to the cytoplasm. The protein resides in the cytoskeleton. Its function is as follows. Binds to actin and affects the structure of the cytoskeleton. At high concentrations, profilin prevents the polymerization of actin, whereas it enhances it at low concentrations. By binding to PIP2, it inhibits the formation of IP3 and DG. This Phleum pratense (Common timothy) protein is Profilin-1 (PRO1).